We begin with the raw amino-acid sequence, 262 residues long: ATP synthase subunit a (262 aa).

Transmembrane regions (helical) follow at residues 30 to 50 (ITSL…LTIF), 64 to 84 (WNIV…DQIG), 91 to 111 (LIYF…NILG), 123 to 143 (ISVT…IGFS), 149 to 169 (FFSL…LVLI), 195 to 215 (LFGV…SILL), and 220 to 240 (IGLP…VALL).

Belongs to the ATPase A chain family. As to quaternary structure, F-type ATPases have 2 components, CF(1) - the catalytic core - and CF(0) - the membrane proton channel. CF(1) has five subunits: alpha(3), beta(3), gamma(1), delta(1), epsilon(1). CF(0) has three main subunits: a, b and c.

Its subcellular location is the mitochondrion inner membrane. Its function is as follows. Mitochondrial membrane ATP synthase (F(1)F(0) ATP synthase or Complex V) produces ATP from ADP in the presence of a proton gradient across the membrane which is generated by electron transport complexes of the respiratory chain. F-type ATPases consist of two structural domains, F(1) - containing the extramembraneous catalytic core and F(0) - containing the membrane proton channel, linked together by a central stalk and a peripheral stalk. During catalysis, ATP synthesis in the catalytic domain of F(1) is coupled via a rotary mechanism of the central stalk subunits to proton translocation. Key component of the proton channel; it may play a direct role in the translocation of protons across the membrane. This is ATP synthase subunit a (ATP6) from Allomyces arbusculus (Aquatic fungus).